We begin with the raw amino-acid sequence, 151 residues long: D-aminoacyl-tRNA deacylase (151 aa).

The Gly-cisPro motif, important for rejection of L-amino acids motif lies at 138 to 139 (GP).

The protein belongs to the DTD family. In terms of assembly, homodimer.

It localises to the cytoplasm. The catalysed reaction is glycyl-tRNA(Ala) + H2O = tRNA(Ala) + glycine + H(+). It carries out the reaction a D-aminoacyl-tRNA + H2O = a tRNA + a D-alpha-amino acid + H(+). Its function is as follows. An aminoacyl-tRNA editing enzyme that deacylates mischarged D-aminoacyl-tRNAs. Also deacylates mischarged glycyl-tRNA(Ala), protecting cells against glycine mischarging by AlaRS. Acts via tRNA-based rather than protein-based catalysis; rejects L-amino acids rather than detecting D-amino acids in the active site. By recycling D-aminoacyl-tRNA to D-amino acids and free tRNA molecules, this enzyme counteracts the toxicity associated with the formation of D-aminoacyl-tRNA entities in vivo and helps enforce protein L-homochirality. This Picosynechococcus sp. (strain ATCC 27264 / PCC 7002 / PR-6) (Agmenellum quadruplicatum) protein is D-aminoacyl-tRNA deacylase.